Reading from the N-terminus, the 482-residue chain is Protein DETOXIFICATION 13 (482 aa).

A run of 12 helical transmembrane segments spans residues 39 to 59 (LICF…LQII), 77 to 97 (LASS…SCAL), 124 to 144 (LALV…LLVF), 159 to 179 (AACL…TRYF), 188 to 208 (LLIT…LLVY), 218 to 238 (ALAL…LMCF), 268 to 288 (AAMI…SGLL), 297 to 317 (VLSV…AIAA), 337 to 357 (IVVY…STSL), 381 to 401 (MAPL…LSGI), 416 to 436 (LGAF…WIHL), and 439 to 459 (VGLW…LTLV).

It belongs to the multi antimicrobial extrusion (MATE) (TC 2.A.66.1) family.

Its subcellular location is the membrane. The sequence is that of Protein DETOXIFICATION 13 from Arabidopsis thaliana (Mouse-ear cress).